A 251-amino-acid chain; its full sequence is CDP-diacylglycerol pyrophosphatase (251 aa).

Residues 4-24 traverse the membrane as a helical segment; the sequence is AGLLFLVMIVIAVVAAGIGYW.

Belongs to the Cdh family.

The protein resides in the cell inner membrane. The catalysed reaction is a CDP-1,2-diacyl-sn-glycerol + H2O = a 1,2-diacyl-sn-glycero-3-phosphate + CMP + 2 H(+). The protein operates within phospholipid metabolism; CDP-diacylglycerol degradation; phosphatidate from CDP-diacylglycerol: step 1/1. This is CDP-diacylglycerol pyrophosphatase from Escherichia coli O127:H6 (strain E2348/69 / EPEC).